The chain runs to 692 residues: Elongation factor G 2 (692 aa).

Residues 8–283 (KDVRNIGIMA…GVVNYLPSPL (276 aa)) form the tr-type G domain. Residues 17–24 (AHIDAGKT), 81–85 (DTPGH), and 135–138 (NKMD) each bind GTP.

Belongs to the TRAFAC class translation factor GTPase superfamily. Classic translation factor GTPase family. EF-G/EF-2 subfamily.

The protein localises to the cytoplasm. Functionally, catalyzes the GTP-dependent ribosomal translocation step during translation elongation. During this step, the ribosome changes from the pre-translocational (PRE) to the post-translocational (POST) state as the newly formed A-site-bound peptidyl-tRNA and P-site-bound deacylated tRNA move to the P and E sites, respectively. Catalyzes the coordinated movement of the two tRNA molecules, the mRNA and conformational changes in the ribosome. This chain is Elongation factor G 2, found in Desulfotalea psychrophila (strain LSv54 / DSM 12343).